Reading from the N-terminus, the 132-residue chain is Small ribosomal subunit protein uS8c (132 aa).

This sequence belongs to the universal ribosomal protein uS8 family. Part of the 30S ribosomal subunit.

Its subcellular location is the plastid. It is found in the chloroplast. Functionally, one of the primary rRNA binding proteins, it binds directly to 16S rRNA central domain where it helps coordinate assembly of the platform of the 30S subunit. In Acorus calamus (Sweet flag), this protein is Small ribosomal subunit protein uS8c (rps8).